The following is a 486-amino-acid chain: Zinc finger CCCH domain-containing protein 49 (486 aa).

Residues 157 to 184 (RNRAHVCSFYVRGECTRGAECPYRHEMP) form a C3H1-type zinc finger. In terms of domain architecture, RRM spans 228–301 (RTLYIGGLDS…VRLKLMWGKP (74 aa)). Disordered stretches follow at residues 329–348 (SQQQ…QQQP) and 379–486 (LVES…NGMT). 2 stretches are compositionally biased toward low complexity: residues 389–407 (PGPQ…GQSY) and 415–430 (YHGG…YGGY). Residues 431–444 (MPPPRMPYQQPPQY) show a composition bias toward pro residues. Residues 445 to 486 (PAYQPMLAPPAQSQASSLQQPAPATQQLGQGPQQQTTQNGMT) are compositionally biased toward low complexity.

This is Zinc finger CCCH domain-containing protein 49 from Oryza sativa subsp. japonica (Rice).